The chain runs to 246 residues: Fasciclin-like arabinogalactan protein 11 (246 aa).

An N-terminal signal peptide occupies residues 1 to 24 (MATSRTFIFSNLFIFFLVIATTYG). One can recognise an FAS1 domain in the interval 34–179 (PTNITAILEK…LAVYQVDQVL (146 aa)). Residues Asn36, Asn68, Asn141, and Asn150 are each glycosylated (N-linked (GlcNAc...) asparagine). Residues 193–222 (PAPEKGGSVSKGSASGGDDGGDSTDSSDAE) are disordered. Ser219 carries GPI-anchor amidated serine lipidation. The propeptide at 220–246 (DAERTGFGFGIRITTVAAIAASSSLWI) is removed in mature form.

The protein belongs to the fasciclin-like AGP family. Expressed in the sclerenchyma cells of inflorescence stems and siliques.

Its subcellular location is the cell membrane. In terms of biological role, may be a cell surface adhesion protein. This is Fasciclin-like arabinogalactan protein 11 (FLA11) from Arabidopsis thaliana (Mouse-ear cress).